Consider the following 442-residue polypeptide: Serine hydroxymethyltransferase (442 aa).

Pyridoxal 5'-phosphate contacts are provided by residues Tyr-54, 100-102, and His-236; that span reads SGS. Cys-125 and Cys-364 are disulfide-bonded. At Lys-237 the chain carries N6-(pyridoxal phosphate)lysine. Gly-272 is a binding site for pyridoxal 5'-phosphate.

This sequence belongs to the SHMT family. As to quaternary structure, homodimer. The cofactor is pyridoxal 5'-phosphate.

The protein resides in the cytoplasm. It localises to the mitochondrion matrix. The protein localises to the plastid. It is found in the apicoplast. Its subcellular location is the nucleus. It catalyses the reaction (6R)-5,10-methylene-5,6,7,8-tetrahydrofolate + glycine + H2O = (6S)-5,6,7,8-tetrahydrofolate + L-serine. It functions in the pathway one-carbon metabolism; tetrahydrofolate interconversion. Its activity is regulated as follows. Redox regulation; active in reducing conditions, inactive in oxidizing conditions. The reduction of the cysteine pairs allows the access binding of the tetrahydrofolate substrate to its binding site. This mechanism appears to be unique to Plasmodium species. Functionally, catalyzes the interconversion of serine to glycine accompanied with the production of 5,10-methylenetetrahydrofolate, a source of one-carbon units used by thymidylate synthase to convert dUMP to dTMP for DNA synthesis. Binds to its own mRNA and to the mRNA of bifunctional dihydrofolate reductase-thymidylate synthase (DHFR-TS) in vitro; the physiological relevance of this interaction is not clear. The polypeptide is Serine hydroxymethyltransferase (Plasmodium falciparum (isolate 3D7)).